Reading from the N-terminus, the 414-residue chain is Signal recognition particle receptor FtsY (414 aa).

Residues 216-223 (GVNGVGKT), 298-302 (DTAGR), and 362-365 (TKLD) contribute to the GTP site.

It belongs to the GTP-binding SRP family. FtsY subfamily. In terms of assembly, part of the signal recognition particle protein translocation system, which is composed of SRP and FtsY. SRP is a ribonucleoprotein composed of Ffh and a 4.5S RNA molecule.

It localises to the cell inner membrane. The protein resides in the cytoplasm. The catalysed reaction is GTP + H2O = GDP + phosphate + H(+). Functionally, involved in targeting and insertion of nascent membrane proteins into the cytoplasmic membrane. Acts as a receptor for the complex formed by the signal recognition particle (SRP) and the ribosome-nascent chain (RNC). Interaction with SRP-RNC leads to the transfer of the RNC complex to the Sec translocase for insertion into the membrane, the hydrolysis of GTP by both Ffh and FtsY, and the dissociation of the SRP-FtsY complex into the individual components. This chain is Signal recognition particle receptor FtsY, found in Haemophilus influenzae (strain ATCC 51907 / DSM 11121 / KW20 / Rd).